The following is a 272-amino-acid chain: Acyl-[acyl-carrier-protein]--UDP-N-acetylglucosamine O-acyltransferase (272 aa).

The protein belongs to the transferase hexapeptide repeat family. LpxA subfamily. In terms of assembly, homotrimer.

The protein resides in the cytoplasm. It carries out the reaction a (3R)-hydroxyacyl-[ACP] + UDP-N-acetyl-alpha-D-glucosamine = a UDP-3-O-[(3R)-3-hydroxyacyl]-N-acetyl-alpha-D-glucosamine + holo-[ACP]. Its pathway is glycolipid biosynthesis; lipid IV(A) biosynthesis; lipid IV(A) from (3R)-3-hydroxytetradecanoyl-[acyl-carrier-protein] and UDP-N-acetyl-alpha-D-glucosamine: step 1/6. Involved in the biosynthesis of lipid A, a phosphorylated glycolipid that anchors the lipopolysaccharide to the outer membrane of the cell. The polypeptide is Acyl-[acyl-carrier-protein]--UDP-N-acetylglucosamine O-acyltransferase (Rhizobium leguminosarum bv. trifolii (strain WSM2304)).